We begin with the raw amino-acid sequence, 561 residues long: Ankyrin repeat protein OPG189 (561 aa).

7 ANK repeats span residues 68–98 (YGENILHIYFIDAANTNIMIFFLDRVLNINK), 172–208 (YGCTLLHRCIYNYKKSESESYNELIKILLNNGSDVDK), 212–242 (YGNTPFILLCKHDIDNAELFEICLENANIDS), 246–275 (NGYTPLHYVSCRNKYDFVKLLISKGANVNA), 279–307 (FGTTPFYCGIIHGISLIKLYLESDTELEI), 342–371 (YNETSIYDAVSYNAYNTLVYLLNRNGDFET), and 375–404 (SGCTCISEAVANNNKIIMDILLSKRPSLKI).

It belongs to the orthopoxvirus OPG189 protein family.

Functionally, contributes to viral release without involving rearrangement of host actin. This chain is Ankyrin repeat protein OPG189 (OPG189), found in Cynomys gunnisoni (Gunnison's prairie dog).